Consider the following 310-residue polypeptide: Malate dehydrogenase (310 aa).

NAD(+) contacts are provided by residues Gly7 to Gly13 and Asp34. Substrate contacts are provided by Arg81 and Arg87. NAD(+) is bound by residues Asn94 and Ile117–Asn119. Asn119 and Arg153 together coordinate substrate. The active-site Proton acceptor is His177. Met227 lines the NAD(+) pocket.

Belongs to the LDH/MDH superfamily. MDH type 1 family. As to quaternary structure, homodimer.

It catalyses the reaction (S)-malate + NAD(+) = oxaloacetate + NADH + H(+). Its function is as follows. Catalyzes the reversible oxidation of malate to oxaloacetate. The chain is Malate dehydrogenase from Vibrio vulnificus (strain YJ016).